The sequence spans 556 residues: Formate--tetrahydrofolate ligase (556 aa).

64-71 contributes to the ATP binding site; it reads TPAGEGKT.

Belongs to the formate--tetrahydrofolate ligase family.

It carries out the reaction (6S)-5,6,7,8-tetrahydrofolate + formate + ATP = (6R)-10-formyltetrahydrofolate + ADP + phosphate. It functions in the pathway one-carbon metabolism; tetrahydrofolate interconversion. The protein is Formate--tetrahydrofolate ligase of Haemophilus ducreyi (strain 35000HP / ATCC 700724).